Reading from the N-terminus, the 134-residue chain is Large ribosomal subunit protein uL16c (134 aa).

This sequence belongs to the universal ribosomal protein uL16 family. Part of the 50S ribosomal subunit.

It is found in the plastid. It localises to the chloroplast. This chain is Large ribosomal subunit protein uL16c, found in Pinus koraiensis (Korean pine).